We begin with the raw amino-acid sequence, 92 residues long: DNA-directed RNA polymerase subunit omega (92 aa).

It belongs to the RNA polymerase subunit omega family. The RNAP catalytic core consists of 2 alpha, 1 beta, 1 beta' and 1 omega subunit. When a sigma factor is associated with the core the holoenzyme is formed, which can initiate transcription.

It carries out the reaction RNA(n) + a ribonucleoside 5'-triphosphate = RNA(n+1) + diphosphate. Its function is as follows. Promotes RNA polymerase assembly. Latches the N- and C-terminal regions of the beta' subunit thereby facilitating its interaction with the beta and alpha subunits. This is DNA-directed RNA polymerase subunit omega from Corynebacterium diphtheriae (strain ATCC 700971 / NCTC 13129 / Biotype gravis).